The sequence spans 241 residues: Proteasome subunit beta type-6 (241 aa).

Residues 1–19 (MATIASEYSSEASNTPIEH) constitute a propeptide that is removed on maturation.

This sequence belongs to the peptidase T1B family. The 26S proteasome consists of a 20S proteasome core and two 19S regulatory subunits. The 20S proteasome core is composed of 28 subunits that are arranged in four stacked rings, resulting in a barrel-shaped structure. The two end rings are each formed by seven alpha subunits, and the two central rings are each formed by seven beta subunits. The catalytic chamber with the active sites is on the inside of the barrel.

The protein resides in the cytoplasm. It localises to the nucleus. Its function is as follows. Non-catalytic component of the proteasome which degrades poly-ubiquitinated proteins in the cytoplasm and in the nucleus. It is essential for the regulated turnover of proteins and for the removal of misfolded proteins. The proteasome is a multicatalytic proteinase complex that is characterized by its ability to cleave peptides with Arg, Phe, Tyr, Leu, and Glu adjacent to the leaving group at neutral or slightly basic pH. It has an ATP-dependent proteolytic activity. This chain is Proteasome subunit beta type-6 (PRE7), found in Saccharomyces cerevisiae (strain ATCC 204508 / S288c) (Baker's yeast).